The chain runs to 129 residues: Small ribosomal subunit protein uS11 (129 aa).

This sequence belongs to the universal ribosomal protein uS11 family. As to quaternary structure, part of the 30S ribosomal subunit. Interacts with proteins S7 and S18. Binds to IF-3.

Located on the platform of the 30S subunit, it bridges several disparate RNA helices of the 16S rRNA. Forms part of the Shine-Dalgarno cleft in the 70S ribosome. The protein is Small ribosomal subunit protein uS11 of Haemophilus ducreyi (strain 35000HP / ATCC 700724).